The primary structure comprises 960 residues: UPF0182 protein DSY1630 (960 aa).

7 helical membrane passes run Ile7–Glu27, Ile50–Ile70, Thr105–Phe125, Phe169–Ile189, Leu212–Phe232, Ala256–Phe276, and Leu285–Leu305. Disordered stretches follow at residues Ser866–Thr899 and Thr924–Pro960. The segment covering Glu881–Glu897 has biased composition (acidic residues). The segment covering Glu931 to Gln944 has biased composition (basic and acidic residues). The segment covering Ser950–Pro960 has biased composition (polar residues).

This sequence belongs to the UPF0182 family.

The protein localises to the cell membrane. The polypeptide is UPF0182 protein DSY1630 (Desulfitobacterium hafniense (strain Y51)).